The following is a 496-amino-acid chain: Glutamate--tRNA ligase 2 (496 aa).

A 'HIGH' region motif is present at residues 13–23; sequence PSPTGRLHVGG. The 'KMSKS' region signature appears at 255-259; it reads KLSKR. Lys258 provides a ligand contact to ATP.

It belongs to the class-I aminoacyl-tRNA synthetase family. Glutamate--tRNA ligase type 1 subfamily. As to quaternary structure, monomer.

Its subcellular location is the cytoplasm. It catalyses the reaction tRNA(Glu) + L-glutamate + ATP = L-glutamyl-tRNA(Glu) + AMP + diphosphate. Catalyzes the attachment of glutamate to tRNA(Glu) in a two-step reaction: glutamate is first activated by ATP to form Glu-AMP and then transferred to the acceptor end of tRNA(Glu). The chain is Glutamate--tRNA ligase 2 from Rubrobacter xylanophilus (strain DSM 9941 / JCM 11954 / NBRC 16129 / PRD-1).